The chain runs to 321 residues: 6-phosphogluconolactonase-like protein 1 (321 aa).

Positions 36 to 85 (GKVSRSTQMSGTSLNGNGNTESKTMERVNSVRSNASSRGGSEDGATKKLK) are disordered. A compositionally biased stretch (polar residues) spans 39 to 57 (SRSTQMSGTSLNGNGNTES). Low complexity predominate over residues 63–74 (VNSVRSNASSRG). Residues serine 65 and serine 68 each carry the phosphoserine modification. Positions 75–85 (GSEDGATKKLK) are enriched in basic and acidic residues. Threonine 320 is modified (phosphothreonine).

The protein belongs to the glucosamine/galactosamine-6-phosphate isomerase family. 6-phosphogluconolactonase subfamily.

It localises to the cytoplasm. It is found in the nucleus. Its function is as follows. May be involved in regulation of tRNA subcellular distribution. In Saccharomyces cerevisiae (strain ATCC 204508 / S288c) (Baker's yeast), this protein is 6-phosphogluconolactonase-like protein 1 (SOL1).